Consider the following 687-residue polypeptide: Mu-like prophage FluMu transposase A (687 aa).

Positions 8 to 74 (THYSVYELAN…ELLLKTTPEQ (67 aa)) constitute an HTH Mu-type domain. Positions 398–417 (PIERAFSHGGLGDYVDKHLL) form a DNA-binding region, H-T-H motif.

Its function is as follows. This transposase is essential for integration, replication-transposition, and excision of Mu-like viral DNA. In Haemophilus influenzae (strain ATCC 51907 / DSM 11121 / KW20 / Rd), this protein is Mu-like prophage FluMu transposase A.